Consider the following 441-residue polypeptide: Tubulin beta-1 chain (441 aa).

Positions 11, 69, 138, 142, 143, 144, 204, and 226 each coordinate GTP. Glu69 serves as a coordination point for Mg(2+).

The protein belongs to the tubulin family. As to quaternary structure, dimer of alpha and beta chains. A typical microtubule is a hollow water-filled tube with an outer diameter of 25 nm and an inner diameter of 15 nM. Alpha-beta heterodimers associate head-to-tail to form protofilaments running lengthwise along the microtubule wall with the beta-tubulin subunit facing the microtubule plus end conferring a structural polarity. Microtubules usually have 13 protofilaments but different protofilament numbers can be found in some organisms and specialized cells. Mg(2+) serves as cofactor. In terms of tissue distribution, expressed primarily in touch receptor neurons.

The protein localises to the cytoplasm. The protein resides in the cytoskeleton. In terms of biological role, tubulin is the major constituent of microtubules, a cylinder consisting of laterally associated linear protofilaments composed of alpha- and beta-tubulin heterodimers. Microtubules grow by the addition of GTP-tubulin dimers to the microtubule end, where a stabilizing cap forms. Below the cap, tubulin dimers are in GDP-bound state, owing to GTPase activity of alpha-tubulin. Plays a role in mechanosensory transduction (touch sensitivity). Its function is as follows. Mec-7 beta-tubulin is required for the production of 15-protofilament microtubules. This Caenorhabditis briggsae protein is Tubulin beta-1 chain (mec-7).